The primary structure comprises 337 residues: Transmembrane protein 120B (337 aa).

Residues 1 to 39 (MSLERCQSEWTEIEQEYQQLQETHKVYRQKLEELTNLQA) adopt a coiled-coil conformation. A run of 6 helical transmembrane segments spans residues 100–122 (GLYL…AKFA), 130–150 (FKLY…FLLN), 157–175 (IFNF…RESI), 185–205 (GWWV…LTWP), 268–288 (FLLP…VTLF), and 300–320 (QVFM…LTTL).

The protein belongs to the TMEM120 family.

Its subcellular location is the nucleus inner membrane. Functionally, necessary for efficient adipogenesis. Does not show ion channel activity. The protein is Transmembrane protein 120B (tmem120b) of Danio rerio (Zebrafish).